The following is a 406-amino-acid chain: Tryptophan 2,3-dioxygenase (406 aa).

A Phosphoserine modification is found at serine 19. Substrate-binding positions include 72–76 and arginine 144; that span reads FIITH. Histidine 328 is a heme binding site. Threonine 342 is a binding site for substrate.

The protein belongs to the tryptophan 2,3-dioxygenase family. As to quaternary structure, homotetramer. Dimer of dimers. Heme serves as cofactor.

It carries out the reaction L-tryptophan + O2 = N-formyl-L-kynurenine. The protein operates within amino-acid degradation; L-tryptophan degradation via kynurenine pathway; L-kynurenine from L-tryptophan: step 1/2. Heme-dependent dioxygenase that catalyzes the oxidative cleavage of the L-tryptophan (L-Trp) pyrrole ring and converts L-tryptophan to N-formyl-L-kynurenine. Catalyzes the oxidative cleavage of the indole moiety. This is Tryptophan 2,3-dioxygenase from Bos taurus (Bovine).